The chain runs to 561 residues: Arginine--tRNA ligase (561 aa).

A 'HIGH' region motif is present at residues 129–139 (ANPTGPLHVGH).

The protein belongs to the class-I aminoacyl-tRNA synthetase family. As to quaternary structure, monomer.

The protein resides in the cytoplasm. It catalyses the reaction tRNA(Arg) + L-arginine + ATP = L-arginyl-tRNA(Arg) + AMP + diphosphate. The chain is Arginine--tRNA ligase from Polaromonas sp. (strain JS666 / ATCC BAA-500).